A 112-amino-acid polypeptide reads, in one-letter code: DNA-directed RNA polymerase subunit Rpo11 (112 aa).

Belongs to the archaeal Rpo11/eukaryotic RPB11/RPC19 RNA polymerase subunit family. As to quaternary structure, part of the RNA polymerase complex.

The protein localises to the cytoplasm. It catalyses the reaction RNA(n) + a ribonucleoside 5'-triphosphate = RNA(n+1) + diphosphate. In terms of biological role, DNA-dependent RNA polymerase (RNAP) catalyzes the transcription of DNA into RNA using the four ribonucleoside triphosphates as substrates. In Methanopyrus kandleri (strain AV19 / DSM 6324 / JCM 9639 / NBRC 100938), this protein is DNA-directed RNA polymerase subunit Rpo11.